The following is a 552-amino-acid chain: Probable malate:quinone oxidoreductase (552 aa).

The interval 530 to 552 (DAKPATPEAKPAQASSPQHDMAL) is disordered. Positions 542-552 (QASSPQHDMAL) are enriched in polar residues.

It belongs to the MQO family. Requires FAD as cofactor.

It catalyses the reaction (S)-malate + a quinone = a quinol + oxaloacetate. Its pathway is carbohydrate metabolism; tricarboxylic acid cycle; oxaloacetate from (S)-malate (quinone route): step 1/1. In Cronobacter sakazakii (strain ATCC BAA-894) (Enterobacter sakazakii), this protein is Probable malate:quinone oxidoreductase.